The sequence spans 78 residues: WAP four-disulfide core domain protein 12 (78 aa).

Positions 1 to 21 (MWPNSILVLTVLLISSTLVTG) are cleaved as a signal peptide. The 48-residue stretch at 25-72 (KGAEKGVCPPDNVRCIRGEDPQCHNDNDCKDQKICCYWHCGFKCVQPV) folds into the WAP domain. Intrachain disulfides connect Cys32–Cys60, Cys39–Cys64, Cys47–Cys59, and Cys53–Cys68.

Its subcellular location is the secreted. Its function is as follows. Antibacterial protein. Putative acid-stable proteinase inhibitor. The polypeptide is WAP four-disulfide core domain protein 12 (Rattus norvegicus (Rat)).